Reading from the N-terminus, the 261-residue chain is MNSKLSLSTKLSSSGKTQLAEYFATPPFKVITLPSYDDAWANGLNAMQMSSSPGVLAGDLLEIDISLAKLTALSLNTQAFTRVQAMNEGDSAMQTTHILLAENSRLFYLPHPLVLHRDSVFKQQTQIEMGEQSELIYGEIVAIGRVLNDERFAFRQFSSHLKIYALQNDGKKRPLVSDCIQWLPSKMNLTALSQMENYSHQGSLTYLNLAKNNAEIKQQVQALQQQSTEEKDLLIGISQLNEYGLMVRVLGCRAEANSEII.

It belongs to the UreD family. In terms of assembly, ureD, UreF and UreG form a complex that acts as a GTP-hydrolysis-dependent molecular chaperone, activating the urease apoprotein by helping to assemble the nickel containing metallocenter of UreC. The UreE protein probably delivers the nickel.

It is found in the cytoplasm. Required for maturation of urease via the functional incorporation of the urease nickel metallocenter. The protein is Urease accessory protein UreD of Haemophilus influenzae (strain ATCC 51907 / DSM 11121 / KW20 / Rd).